A 264-amino-acid polypeptide reads, in one-letter code: 3-dehydroquinate dehydratase (264 aa).

3-dehydroquinate-binding positions include 50–52 (EWR) and Arg86. The Proton donor/acceptor role is filled by His148. The Schiff-base intermediate with substrate role is filled by Lys175. Positions 217, 236, and 240 each coordinate 3-dehydroquinate.

It belongs to the type-I 3-dehydroquinase family. In terms of assembly, homodimer.

The catalysed reaction is 3-dehydroquinate = 3-dehydroshikimate + H2O. Its pathway is metabolic intermediate biosynthesis; chorismate biosynthesis; chorismate from D-erythrose 4-phosphate and phosphoenolpyruvate: step 3/7. Involved in the third step of the chorismate pathway, which leads to the biosynthesis of aromatic amino acids. Catalyzes the cis-dehydration of 3-dehydroquinate (DHQ) and introduces the first double bond of the aromatic ring to yield 3-dehydroshikimate. The protein is 3-dehydroquinate dehydratase of Albidiferax ferrireducens (strain ATCC BAA-621 / DSM 15236 / T118) (Rhodoferax ferrireducens).